A 453-amino-acid polypeptide reads, in one-letter code: Gamma-aminobutyric acid receptor subunit alpha-6 (453 aa).

The N-terminal stretch at 1–19 (MLLLLPWLFSLLWIENAQA) is a signal peptide. The Extracellular portion of the chain corresponds to 20–243 (QLEDEGNFYS…FHLQRKMGYF (224 aa)). N31 carries N-linked (GlcNAc...) asparagine glycosylation. R84 contacts 4-aminobutanoate. Residues N128 and N141 are each glycosylated (N-linked (GlcNAc...) asparagine). T147 is a binding site for 4-aminobutanoate. A disulfide bond links C156 and C170. The helical transmembrane segment at 244 to 264 (MIQIYTPCIMTVILSQVSFWI) threads the bilayer. Topologically, residues 265–270 (NKESVP) are cytoplasmic. Residues 271–290 (ARTVFGITTVLTMTTLSISA) traverse the membrane as a helical segment. Over 291-304 (RHSLPKVSYATAMD) the chain is Extracellular. A helical transmembrane segment spans residues 305–325 (WFIAVCFAFVFSALIEFAAVN). Topologically, residues 326–422 (YFTNLQSQKA…GTSKIDQYSR (97 aa)) are cytoplasmic. S375 is modified (phosphoserine). Residue T403 is modified to Phosphothreonine. Residues 423–443 (ILFPVAFAGFNLVYWIVYLSK) traverse the membrane as a helical segment. Residues 444 to 453 (DTMEVSSTVE) are Extracellular-facing.

This sequence belongs to the ligand-gated ion channel (TC 1.A.9) family. Gamma-aminobutyric acid receptor (TC 1.A.9.5) subfamily. GABRA6 sub-subfamily. In terms of assembly, heteropentamer, formed by a combination of alpha (GABRA1-6), beta (GABRB1-3), gamma (GABRG1-3), delta (GABRD), epsilon (GABRE), rho (GABRR1-3), pi (GABRP) and theta (GABRQ) chains, each subunit exhibiting distinct physiological and pharmacological properties. Binds UBQLN1. Expressed in brain, in cerebellar granule cells.

Its subcellular location is the postsynaptic cell membrane. It is found in the cell membrane. The catalysed reaction is chloride(in) = chloride(out). Alpha subunit of the heteropentameric ligand-gated chloride channel gated by gamma-aminobutyric acid (GABA), a major inhibitory neurotransmitter in the brain. GABA-gated chloride channels, also named GABA(A) receptors (GABAAR), consist of five subunits arranged around a central pore and contain GABA active binding site(s) located at the alpha and beta subunit interface(s). When activated by GABA, GABAARs selectively allow the flow of chloride anions across the cell membrane down their electrochemical gradient. Alpha-6/GABRA6 subunits are found at both synaptic and extrasynaptic sites. Chloride influx into the postsynaptic neuron following GABAAR opening decreases the neuron ability to generate a new action potential, thereby reducing nerve transmission. Extrasynaptic alpha-6-containing receptors contribute to the tonic GABAergic inhibition. Alpha-6 subunits are also present on glutamatergic synapses. This is Gamma-aminobutyric acid receptor subunit alpha-6 from Rattus norvegicus (Rat).